Here is a 354-residue protein sequence, read N- to C-terminus: Fusarinine C esterase sidJ (354 aa).

The protein belongs to the sidJ hydrolase family. In terms of assembly, homodimer.

It catalyses the reaction fusarinine C + 3 H2O = 3 fusarinine + Fe(3+). Its function is as follows. Displays specific fusarinine C (FsC) esterase activity but does not hydrolyze triacetylfusarinine C (TAFC), which has the same core structure as fusarinine C. Both extra- and intracellular siderophores have been shown to be crucial for the virulence. Subsequent to chelation of iron and uptake, FsC and TAFC are hydrolyzed and the iron is transferred to the metabolism or to the intracellular siderophore ferricrocin (FC) for transport and storage of iron. The sequence is that of Fusarinine C esterase sidJ from Aspergillus fumigatus (strain ATCC MYA-4609 / CBS 101355 / FGSC A1100 / Af293) (Neosartorya fumigata).